The following is a 134-amino-acid chain: Small ribosomal subunit protein uS8 (134 aa).

Belongs to the universal ribosomal protein uS8 family. As to quaternary structure, part of the 30S ribosomal subunit. Contacts proteins S5 and S12.

In terms of biological role, one of the primary rRNA binding proteins, it binds directly to 16S rRNA central domain where it helps coordinate assembly of the platform of the 30S subunit. This chain is Small ribosomal subunit protein uS8, found in Thermotoga neapolitana (strain ATCC 49049 / DSM 4359 / NBRC 107923 / NS-E).